The sequence spans 162 residues: Putative 4-hydroxy-4-methyl-2-oxoglutarate aldolase (162 aa).

Residues 75–78 (GDML) and Arg97 each bind substrate. Asp98 is a binding site for a divalent metal cation.

The protein belongs to the class II aldolase/RraA-like family. As to quaternary structure, homotrimer. The cofactor is a divalent metal cation.

The enzyme catalyses 4-hydroxy-4-methyl-2-oxoglutarate = 2 pyruvate. It catalyses the reaction oxaloacetate + H(+) = pyruvate + CO2. Functionally, catalyzes the aldol cleavage of 4-hydroxy-4-methyl-2-oxoglutarate (HMG) into 2 molecules of pyruvate. Also contains a secondary oxaloacetate (OAA) decarboxylase activity due to the common pyruvate enolate transition state formed following C-C bond cleavage in the retro-aldol and decarboxylation reactions. The sequence is that of Putative 4-hydroxy-4-methyl-2-oxoglutarate aldolase from Pseudomonas syringae pv. tomato (strain ATCC BAA-871 / DC3000).